The sequence spans 236 residues: Dual specificity protein phosphatase 15 (236 aa).

The N-myristoyl glycine moiety is linked to residue Gly2. Positions 4-144 (GMTKVLPGLY…LEEFGWANSQ (141 aa)) constitute a Tyrosine-protein phosphatase domain. The active-site Phosphocysteine intermediate is Cys88. The segment at 178–213 (GPGTSAPSATTASSAASEGTLQRLVPRSPRESHRPL) is disordered. The span at 181 to 194 (TSAPSATTASSAAS) shows a compositional bias: low complexity.

It belongs to the protein-tyrosine phosphatase family. Non-receptor class dual specificity subfamily.

Its subcellular location is the cell membrane. The catalysed reaction is O-phospho-L-tyrosyl-[protein] + H2O = L-tyrosyl-[protein] + phosphate. It catalyses the reaction O-phospho-L-seryl-[protein] + H2O = L-seryl-[protein] + phosphate. It carries out the reaction O-phospho-L-threonyl-[protein] + H2O = L-threonyl-[protein] + phosphate. May play a role in the regulation of oligodendrocyte differentiation. May play a role in the regulation of myelin formation. Involved in the regulation of Erk1/2 phosphorylation in Schwann cells; the signaling may be linked to the regulation of myelination. May dephosphorylate MAPK13, ATF2, ERBB3, PDGFRB and SNX6. The chain is Dual specificity protein phosphatase 15 (Dusp15) from Rattus norvegicus (Rat).